An 839-amino-acid chain; its full sequence is Autophagy-related protein 9A (839 aa).

The tract at residues 1-21 (MAQFDTEYQRLEASYSDSPPG) is disordered. Ala2 carries the post-translational modification N-acetylalanine. Topologically, residues 2-61 (AQFDTEYQRLEASYSDSPPGEEDLLVHVPEGSKSPWHHIENLDLFFSRVYNLHQKNGFTC) are cytoplasmic. The Tyrosine-based sorting signal motif lies at 8 to 11 (YQRL). A phosphoserine mark is found at Ser14, Ser16, and Ser18. The chain crosses the membrane as a helical span at residues 62 to 84 (MLIGEIFELMQFLFVVAFTTFLV). The Lumenal segment spans residues 85 to 128 (SCVDYDILFANKMVNHSLHPTEPVKVTLPDAFLPAQVCSARIQE). N-linked (GlcNAc...) asparagine glycosylation is present at Asn99. The chain crosses the membrane as a helical span at residues 129–154 (NGSLITILVIAGVFWVHRLIKFIYNI). At 155-290 (CCYWEIHSFY…ELAQRLSNRI (136 aa)) the chain is on the cytoplasmic side. The stretch at 291 to 301 (LWIGIANFLLC) is an intramembrane region. The Cytoplasmic segment spans residues 302 to 319 (PLILIWQILYAFFSYAEV). The stretch at 320–328 (LKREPGALG) is an intramembrane region. At 329-371 (ARCWSLYGRCYLRHFNELEHELQSRLNRGYKPASKYMNCFLSP) the chain is on the cytoplasmic side. A helical transmembrane segment spans residues 372 to 397 (LLTLLAKNCAFFAGSILAVLIALTIY). The Lumenal segment spans residues 398–406 (DEDVLAVEH). The helical transmembrane segment at 407 to 424 (VLTTVTLLGVTVTVCRSF) threads the bilayer. Residues 425–470 (IPDQHMVFCPEQLLRVILAHIHYMPDHWQGNAHRSQTRDEFAQLFQ) lie on the Cytoplasmic side of the membrane. The stretch at 471-480 (YKAVFILEEL) is an intramembrane region. Residues 481 to 483 (LSP) are Cytoplasmic-facing. Residues 484 to 492 (IVTPLILIF) lie within the membrane without spanning it. Topologically, residues 493-839 (CLRPRALEII…DELPPQVHKV (347 aa)) are cytoplasmic. Phosphoserine is present on residues Ser656, Ser735, Ser738, Ser741, and Ser828. 2 disordered regions span residues 656 to 688 (SPLQ…GSSV) and 719 to 839 (QQAQ…VHKV). Residues 724–736 (EPERHVWHRRESD) are compositionally biased toward basic and acidic residues. Acidic residues-rich tracts occupy residues 737–747 (ESGESAPEEGG) and 823–832 (VPEEGSEDEL).

This sequence belongs to the ATG9 family. As to quaternary structure, homotrimer; forms a homotrimer with a central pore that forms a path between the two membrane leaflets. Interacts (via cytoplasmic its C-terminus) with ATG2A. Interacts with SUPT20H. Interacts (via the tyrosine-based sorting signal motif) with AP4M1; promoting association with the AP-4 complex. Interacts with ARFIP1 and ARFIP2. Interacts with PI4K2A and PI4KB. Interacts with ATG4A; the interaction is direct and promotes ATG9A trafficking. Ufmylated in a DDRGK1 dependent manner.

The protein resides in the preautophagosomal structure membrane. It is found in the cytoplasmic vesicle. Its subcellular location is the autophagosome membrane. It localises to the golgi apparatus. The protein localises to the trans-Golgi network membrane. The protein resides in the late endosome membrane. It is found in the recycling endosome membrane. Its subcellular location is the endoplasmic reticulum membrane. It localises to the mitochondrion membrane. It carries out the reaction a 1,2-diacyl-sn-glycero-3-phosphocholine(in) = a 1,2-diacyl-sn-glycero-3-phosphocholine(out). The enzyme catalyses a 1,2-diacyl-sn-glycero-3-phospho-L-serine(in) = a 1,2-diacyl-sn-glycero-3-phospho-L-serine(out). It catalyses the reaction a 1,2-diacyl-sn-glycero-3-phosphoethanolamine(in) = a 1,2-diacyl-sn-glycero-3-phosphoethanolamine(out). Phospholipid scramblase involved in autophagy by mediating autophagosomal membrane expansion. Cycles between the preautophagosomal structure/phagophore assembly site (PAS) and the cytoplasmic vesicle pool and supplies membrane for the growing autophagosome. Lipid scramblase activity plays a key role in preautophagosomal structure/phagophore assembly by distributing the phospholipids that arrive through ATG2 (ATG2A or ATG2B) from the cytoplasmic to the luminal leaflet of the bilayer, thereby driving autophagosomal membrane expansion. Also required to supply phosphatidylinositol 4-phosphate to the autophagosome initiation site by recruiting the phosphatidylinositol 4-kinase beta (PI4KB) in a process dependent on ARFIP2, but not ARFIP1. In addition to autophagy, also plays a role in necrotic cell death. The protein is Autophagy-related protein 9A of Bos taurus (Bovine).